We begin with the raw amino-acid sequence, 299 residues long: 33 kDa chaperonin (299 aa).

2 disulfides stabilise this stretch: Cys239–Cys241 and Cys272–Cys275.

This sequence belongs to the HSP33 family. In terms of processing, under oxidizing conditions two disulfide bonds are formed involving the reactive cysteines. Under reducing conditions zinc is bound to the reactive cysteines and the protein is inactive.

It localises to the cytoplasm. In terms of biological role, redox regulated molecular chaperone. Protects both thermally unfolding and oxidatively damaged proteins from irreversible aggregation. Plays an important role in the bacterial defense system toward oxidative stress. This chain is 33 kDa chaperonin, found in Acaryochloris marina (strain MBIC 11017).